Reading from the N-terminus, the 370-residue chain is tRNA pseudouridine synthase D (370 aa).

The active-site Nucleophile is the aspartate 77. The 146-residue stretch at 152-297 (GVPNYFGEQR…LEQERRPLLL (146 aa)) folds into the TRUD domain.

Belongs to the pseudouridine synthase TruD family.

It catalyses the reaction uridine(13) in tRNA = pseudouridine(13) in tRNA. Its function is as follows. Responsible for synthesis of pseudouridine from uracil-13 in transfer RNAs. The sequence is that of tRNA pseudouridine synthase D from Shewanella oneidensis (strain ATCC 700550 / JCM 31522 / CIP 106686 / LMG 19005 / NCIMB 14063 / MR-1).